The chain runs to 202 residues: Outer-membrane lipoprotein carrier protein (202 aa).

Residues 1 to 20 (MKKQLLIGSVLLVASSQVWA) form the signal peptide.

The protein belongs to the LolA family. In terms of assembly, monomer.

Its subcellular location is the periplasm. In terms of biological role, participates in the translocation of lipoproteins from the inner membrane to the outer membrane. Only forms a complex with a lipoprotein if the residue after the N-terminal Cys is not an aspartate (The Asp acts as a targeting signal to indicate that the lipoprotein should stay in the inner membrane). This Aeromonas salmonicida (strain A449) protein is Outer-membrane lipoprotein carrier protein.